Reading from the N-terminus, the 390-residue chain is Chorismate synthase (390 aa).

Residues Arg-40 and Arg-46 each contribute to the NADP(+) site. FMN contacts are provided by residues 129 to 131 (RAS), 249 to 250 (QA), Gly-294, 309 to 313 (KPIPT), and Arg-335.

The protein belongs to the chorismate synthase family. In terms of assembly, homotetramer. Requires FMNH2 as cofactor.

The enzyme catalyses 5-O-(1-carboxyvinyl)-3-phosphoshikimate = chorismate + phosphate. Its pathway is metabolic intermediate biosynthesis; chorismate biosynthesis; chorismate from D-erythrose 4-phosphate and phosphoenolpyruvate: step 7/7. Catalyzes the anti-1,4-elimination of the C-3 phosphate and the C-6 proR hydrogen from 5-enolpyruvylshikimate-3-phosphate (EPSP) to yield chorismate, which is the branch point compound that serves as the starting substrate for the three terminal pathways of aromatic amino acid biosynthesis. This reaction introduces a second double bond into the aromatic ring system. The polypeptide is Chorismate synthase (Desulforudis audaxviator (strain MP104C)).